Reading from the N-terminus, the 238-residue chain is Ion-translocating oxidoreductase complex subunit E (238 aa).

The next 5 helical transmembrane spans lie at 41 to 61 (LGLG…VSLV), 71 to 91 (LPAF…LMQA), 95 to 115 (ELYQ…VILG), 130 to 150 (SFDG…LGGL), and 184 to 204 (GFLL…LIAL).

It belongs to the NqrDE/RnfAE family. As to quaternary structure, the complex is composed of six subunits: RnfA, RnfB, RnfC, RnfD, RnfE and RnfG.

The protein resides in the cell inner membrane. Its function is as follows. Part of a membrane-bound complex that couples electron transfer with translocation of ions across the membrane. In Pseudomonas aeruginosa (strain LESB58), this protein is Ion-translocating oxidoreductase complex subunit E.